Reading from the N-terminus, the 115-residue chain is Large ribosomal subunit protein bL20 (115 aa).

Belongs to the bacterial ribosomal protein bL20 family.

Binds directly to 23S ribosomal RNA and is necessary for the in vitro assembly process of the 50S ribosomal subunit. It is not involved in the protein synthesizing functions of that subunit. The chain is Large ribosomal subunit protein bL20 from Malacoplasma penetrans (strain HF-2) (Mycoplasma penetrans).